Consider the following 302-residue polypeptide: Oxygen-dependent coproporphyrinogen-III oxidase (302 aa).

Ser94 is a substrate binding site. His98 and His108 together coordinate a divalent metal cation. The active-site Proton donor is the His108. A substrate-binding site is contributed by Asn110 to Arg112. The a divalent metal cation site is built by His147 and His177. The segment at Tyr242–Arg277 is important for dimerization. Gly260–Arg262 serves as a coordination point for substrate.

It belongs to the aerobic coproporphyrinogen-III oxidase family. As to quaternary structure, homodimer. A divalent metal cation is required as a cofactor.

It is found in the cytoplasm. The catalysed reaction is coproporphyrinogen III + O2 + 2 H(+) = protoporphyrinogen IX + 2 CO2 + 2 H2O. It functions in the pathway porphyrin-containing compound metabolism; protoporphyrin-IX biosynthesis; protoporphyrinogen-IX from coproporphyrinogen-III (O2 route): step 1/1. In terms of biological role, involved in the heme biosynthesis. Catalyzes the aerobic oxidative decarboxylation of propionate groups of rings A and B of coproporphyrinogen-III to yield the vinyl groups in protoporphyrinogen-IX. This chain is Oxygen-dependent coproporphyrinogen-III oxidase, found in Ralstonia nicotianae (strain ATCC BAA-1114 / GMI1000) (Ralstonia solanacearum).